A 168-amino-acid chain; its full sequence is Plastocyanin A, chloroplastic (168 aa).

The transit peptide at 1–69 (MATVTSAAVS…SAMIASNAMA (69 aa)) directs the protein to the chloroplast. Positions 70–168 (IDVLLGADDG…AGMVGKVTVN (99 aa)) constitute a Plastocyanin-like domain. Cu cation contacts are provided by His106, Cys153, His156, and Met161.

Belongs to the plastocyanin family. Requires Cu(2+) as cofactor.

The protein resides in the plastid. It localises to the chloroplast thylakoid membrane. In terms of biological role, participates in electron transfer between P700 and the cytochrome b6-f complex in photosystem I. The protein is Plastocyanin A, chloroplastic (PETE) of Populus nigra (Lombardy poplar).